The primary structure comprises 158 residues: HTH-type transcriptional repressor NicR (158 aa).

One can recognise an HTH marR-type domain in the interval T20 to D152. Positions Q66–A89 form a DNA-binding region, H-T-H motif.

Its pathway is cofactor degradation; nicotinate degradation [regulation]. Functionally, transcriptional repressor for the nicCDEFTP and nicXR operons, encoding the lower aerobic nicotinate degradation pathway. Acts under non-induced conditions: repression of the nicCDEFTP and nicXR operons becomes alleviated in presence of 6-hydroxynicotinate (6HNA). The sequence is that of HTH-type transcriptional repressor NicR (nicR) from Pseudomonas putida (strain ATCC 47054 / DSM 6125 / CFBP 8728 / NCIMB 11950 / KT2440).